Here is a 441-residue protein sequence, read N- to C-terminus: Dolichyl-diphosphooligosaccharide--protein glycosyltransferase 48 kDa subunit (441 aa).

Positions 1 to 28 (MKMVPRLAVRAWPLCGLLLAALGCVCAS) are cleaved as a signal peptide. Residues 29–412 (GPRTLVLLDN…YERFIPSAYP (384 aa)) lie on the Lumenal side of the membrane. A helical transmembrane segment spans residues 413–432 (YYASAFSMMAGLFLFSVVFL). The Cytoplasmic portion of the chain corresponds to 433-441 (HMKEKEKSD).

It belongs to the DDOST 48 kDa subunit family. As to quaternary structure, component of the oligosaccharyltransferase (OST) complex. OST exists in two different complex forms which contain common core subunits RPN1, RPN2, OST48, OST4, DAD1 and TMEM258, either STT3A or STT3B as catalytic subunits, and form-specific accessory subunits. STT3A complex assembly occurs through the formation of 3 subcomplexes. Subcomplex 1 contains RPN1 and TMEM258, subcomplex 2 contains the STT3A-specific subunits STT3A, DC2/OSTC, and KCP2 as well as the core subunit OST4, and subcomplex 3 contains RPN2, DAD1, and OST48. The STT3A complex can form stable complexes with the Sec61 complex or with both the Sec61 and TRAP complexes. Interacts with SMIM22.

The protein localises to the endoplasmic reticulum membrane. It functions in the pathway protein modification; protein glycosylation. Subunit of the oligosaccharyl transferase (OST) complex that catalyzes the initial transfer of a defined glycan (Glc(3)Man(9)GlcNAc(2) in eukaryotes) from the lipid carrier dolichol-pyrophosphate to an asparagine residue within an Asn-X-Ser/Thr consensus motif in nascent polypeptide chains, the first step in protein N-glycosylation. N-glycosylation occurs cotranslationally and the complex associates with the Sec61 complex at the channel-forming translocon complex that mediates protein translocation across the endoplasmic reticulum (ER). All subunits are required for a maximal enzyme activity. Required for the assembly of both SST3A- and SS3B-containing OST complexes. The chain is Dolichyl-diphosphooligosaccharide--protein glycosyltransferase 48 kDa subunit from Rattus norvegicus (Rat).